Here is a 388-residue protein sequence, read N- to C-terminus: Alanine racemase (388 aa).

Lys44 acts as the Proton acceptor; specific for D-alanine in catalysis. Position 44 is an N6-(pyridoxal phosphate)lysine (Lys44). Arg142 contacts substrate. Tyr273 functions as the Proton acceptor; specific for L-alanine in the catalytic mechanism. Met321 contacts substrate.

It belongs to the alanine racemase family. The cofactor is pyridoxal 5'-phosphate.

The catalysed reaction is L-alanine = D-alanine. It functions in the pathway amino-acid biosynthesis; D-alanine biosynthesis; D-alanine from L-alanine: step 1/1. Functionally, catalyzes the interconversion of L-alanine and D-alanine. May also act on other amino acids. The sequence is that of Alanine racemase (alr) from Mycobacterium leprae (strain TN).